Here is a 46-residue protein sequence, read N- to C-terminus: Cytochrome b559 subunit beta (46 aa).

A helical membrane pass occupies residues Trp-21–Ala-37. His-25 contributes to the heme binding site.

This sequence belongs to the PsbE/PsbF family. Heterodimer of an alpha subunit and a beta subunit. PSII is composed of 1 copy each of membrane proteins PsbA, PsbB, PsbC, PsbD, PsbE, PsbF, PsbH, PsbI, PsbJ, PsbK, PsbL, PsbM, PsbT, PsbX, PsbY, PsbZ, Psb30/Ycf12, peripheral proteins PsbO, CyanoQ (PsbQ), PsbU, PsbV and a large number of cofactors. It forms dimeric complexes. It depends on heme b as a cofactor.

It localises to the cellular thylakoid membrane. Its function is as follows. This b-type cytochrome is tightly associated with the reaction center of photosystem II (PSII). PSII is a light-driven water:plastoquinone oxidoreductase that uses light energy to abstract electrons from H(2)O, generating O(2) and a proton gradient subsequently used for ATP formation. It consists of a core antenna complex that captures photons, and an electron transfer chain that converts photonic excitation into a charge separation. This chain is Cytochrome b559 subunit beta, found in Synechococcus sp. (strain CC9605).